The following is a 665-amino-acid chain: GRB2-associated-binding protein 2 (665 aa).

A Phosphoserine modification is found at Ser-2. The 112-residue stretch at Asp-8–Gly-119 folds into the PH domain. Residues Arg-131–Pro-183 are disordered. 10 positions are modified to phosphoserine: Ser-135, Ser-142, Ser-143, Ser-149, Ser-150, Ser-160, Ser-165, Ser-211, Ser-220, and Ser-261. Residues Ser-160–Leu-170 are compositionally biased toward polar residues. Thr-262 carries the phosphothreonine modification. The residue at position 263 (Tyr-263) is a Phosphotyrosine. Thr-275 is subject to Phosphothreonine. Ser-278 and Ser-282 each carry phosphoserine. Position 284 is a phosphothreonine (Thr-284). Position 290 is a phosphotyrosine (Tyr-290). Thr-328 is modified (phosphothreonine). 2 disordered regions span residues Thr-340–Val-442 and Pro-491–Leu-517. The SH3-binding motif lies at Pro-348–Pro-355. Ser-365 bears the Phosphoserine mark. Residues Thr-382 and Thr-388 each carry the phosphothreonine modification. Position 402 is a phosphoserine (Ser-402). Thr-405 is modified (phosphothreonine). Over residues Gly-412–Ser-423 the composition is skewed to low complexity. Phosphoserine occurs at positions 420 and 423. Tyr-441 is subject to Phosphotyrosine. The SH3-binding motif lies at Pro-499–Pro-508. At Ser-532 the chain carries Phosphoserine. 2 stretches are compositionally biased toward polar residues: residues Ser-548–Ser-566 and Asn-578–Ser-600. The interval Ser-548–Asp-631 is disordered. Ser-612 is subject to Phosphoserine. Tyr-632 bears the Phosphotyrosine mark. Positions Thr-646–Pro-659 are enriched in polar residues. Positions Thr-646–Leu-665 are disordered.

This sequence belongs to the GAB family. As to quaternary structure, part of a complex composed of EEIG1, TNFRSF11A/RANK, PLCG2, GAB2, TEC and BTK; complex formation increases in the presence of TNFSF11/RANKL. Interacts with HCK. Interacts with SHC1; may mediate interaction with receptors. Interacts with SYK. Interacts with PI-3 kinase. Interacts with GRB2 (via SH3 2 domain). Interacts (phosphorylated) with PTPN11. Interacts with TNFRSF11A (via cytoplasmic domain). Interacts (phosphorylated) with 14-3-3 family proteins SFN, YWHAB, YWHAE, YWHAG, YWHAH, YWHAQ and YWHAZ; prevents interaction with GRB2 and attenuates GAB2 signaling. Phosphorylated upon EGF stimulation. Phosphorylated on tyrosine residues by HCK upon IL6 signaling. Phosphorylated on tyrosine residue(s) by the thrombopoietin receptor (TPOR), stem cell factor receptor (SCFR), and T-cell and B-cell antigen receptors, gp130, IL-2R and IL-3R. Phosphorylated upon stimulation of TNFRSF11A/RANK by TNFSF11/RANKL. In terms of processing, dephosphorylated by PTPN11.

It is found in the cytoplasm. The protein localises to the cell membrane. The protein resides in the membrane raft. Adapter protein which acts downstream of several membrane receptors including cytokine, antigen, hormone, cell matrix and growth factor receptors to regulate multiple signaling pathways. Regulates osteoclast differentiation mediating the TNFRSF11A/RANK signaling. In allergic response, it plays a role in mast cells activation and degranulation through PI-3-kinase regulation. Also involved in the regulation of cell proliferation and hematopoiesis. The sequence is that of GRB2-associated-binding protein 2 (Gab2) from Rattus norvegicus (Rat).